Here is a 26-residue protein sequence, read N- to C-terminus: Aldehyde dehydrogenase beta chain (26 aa).

As to quaternary structure, heterotrimer composed of an alpha, a beta and a gamma chain. It depends on FAD as a cofactor.

It catalyses the reaction an aldehyde + a quinone + H2O = a quinol + a carboxylate + H(+). In Amycolatopsis methanolica, this protein is Aldehyde dehydrogenase beta chain.